We begin with the raw amino-acid sequence, 547 residues long: CTP synthase (547 aa).

An amidoligase domain region spans residues 1 to 273 (MNNKKLKSKF…DHFILNHFQL (273 aa)). Serine 19 contributes to the CTP binding site. Serine 19 contributes to the UTP binding site. 20 to 25 (SLGKGI) provides a ligand contact to ATP. L-glutamine is bound at residue tyrosine 60. Residue aspartate 77 coordinates ATP. Residues aspartate 77 and glutamate 147 each contribute to the Mg(2+) site. CTP contacts are provided by residues 154 to 156 (DIE), 194 to 199 (KTKPTQ), and lysine 230. UTP-binding positions include 194 to 199 (KTKPTQ) and lysine 230. In terms of domain architecture, Glutamine amidotransferase type-1 spans 306 to 539 (YVILHDAYLS…VEAALLKNGK (234 aa)). Glycine 361 serves as a coordination point for L-glutamine. Catalysis depends on cysteine 388, which acts as the Nucleophile; for glutamine hydrolysis. L-glutamine contacts are provided by residues 389–392 (FGMQ), glutamate 412, and arginine 466. Residues histidine 512 and glutamate 514 contribute to the active site.

Belongs to the CTP synthase family. Homotetramer.

It carries out the reaction UTP + L-glutamine + ATP + H2O = CTP + L-glutamate + ADP + phosphate + 2 H(+). The enzyme catalyses L-glutamine + H2O = L-glutamate + NH4(+). The catalysed reaction is UTP + NH4(+) + ATP = CTP + ADP + phosphate + 2 H(+). The protein operates within pyrimidine metabolism; CTP biosynthesis via de novo pathway; CTP from UDP: step 2/2. Allosterically activated by GTP, when glutamine is the substrate; GTP has no effect on the reaction when ammonia is the substrate. The allosteric effector GTP functions by stabilizing the protein conformation that binds the tetrahedral intermediate(s) formed during glutamine hydrolysis. Inhibited by the product CTP, via allosteric rather than competitive inhibition. In terms of biological role, catalyzes the ATP-dependent amination of UTP to CTP with either L-glutamine or ammonia as the source of nitrogen. Regulates intracellular CTP levels through interactions with the four ribonucleotide triphosphates. This Phytoplasma australiense protein is CTP synthase.